The primary structure comprises 392 residues: CD2 homolog (392 aa).

A signal peptide spans 1 to 16 (MIIKLIFLICFKIVLS). The Extracellular portion of the chain corresponds to 17–222 (IDNKTKFNET…YLDFFQVTSY (206 aa)). Residues N39, N88, N92, N106, N148, N159, N183, N191, N198, and N204 are each glycosylated (N-linked (GlcNAc...) asparagine; by host). Cystine bridges form between C137-C205 and C144-C188. A helical transmembrane segment spans residues 223–243 (IFYMIIFIVTGITVSILISII). Topologically, residues 244-392 (TFLFIRKRKH…ISLIHVDRII (149 aa)) are cytoplasmic. The segment at 258–290 (ESPPPESNEEEQQCHHDTTSIHEPSPREPLLPK) is disordered. Residues 269-283 (QQCHHDTTSIHEPSP) show a composition bias toward basic and acidic residues. 5 tandem repeats follow at residues 319–324 (KPCPPP), 325–330 (KPCPPP), 331–336 (KPCPPP), 337–342 (KPCPPS), and 343–348 (KPCPPP). The segment at 319 to 348 (KPCPPPKPCPPPKPCPPPKPCPPSKPCPPP) is 5 X 6 AA tandem repeats of K-P-C-[PRS]-[P]-[PS]. The tract at residues 328 to 357 (PPPKPCPPPKPCPPSKPCPPPEPYSPPKPC) is disordered.

It belongs to the asfivirus CD2 homolog protein family. In terms of assembly, both glycosylated and nonglycosylated forms interact (via C-terminus) with the host AP-1 complex. Cleaved into two fragments of 63 kDa and 26 kDa containing respectively the glycosylated N-terminus and the nonglycosylated C-terminus. A full-length 89-kDa glycosylated form also exists.

The protein resides in the host cell membrane. It localises to the virion membrane. Its subcellular location is the host Golgi apparatus. Functionally, may play an immunosuppressive role by inhibiting lymphocyte proliferation and subsequently facilitating viral replication and generalization of infection. Responsible for viral hemadsorption, which may help viral spread. Increases virus replication in the tick vector at the step of virus uptake or replication in the tick gut. May play a role in the host Golgi reorganization to yield viral factories. May play a role in host cell penetration. In Ornithodoros (relapsing fever ticks), this protein is CD2 homolog.